We begin with the raw amino-acid sequence, 404 residues long: Glucose-1-phosphate adenylyltransferase (404 aa).

Residues Tyr-99, Gly-164, 179 to 180, and Ser-197 contribute to the alpha-D-glucose 1-phosphate site; that span reads EK.

It belongs to the bacterial/plant glucose-1-phosphate adenylyltransferase family. In terms of assembly, homotetramer.

It carries out the reaction alpha-D-glucose 1-phosphate + ATP + H(+) = ADP-alpha-D-glucose + diphosphate. It functions in the pathway glycan biosynthesis; glycogen biosynthesis. Its function is as follows. Involved in the biosynthesis of ADP-glucose, a building block required for the elongation reactions to produce glycogen. Catalyzes the reaction between ATP and alpha-D-glucose 1-phosphate (G1P) to produce pyrophosphate and ADP-Glc. In Rhodococcus jostii (strain RHA1), this protein is Glucose-1-phosphate adenylyltransferase.